The following is a 684-amino-acid chain: Calpain-14 (684 aa).

Residues Leu43–Thr336 form the Calpain catalytic domain. Residues Cys101, His254, and Asn278 contribute to the active site. Residues Pro337 to Asn503 are domain III. The segment at Ser504 to Glu517 is linker. Residues Arg518–Tyr683 form a domain IV region. EF-hand domains are found at residues Phe557–Ser592, Trp586–Met621, and Leu651–Ser684. 5 residues coordinate Ca(2+): Asp570, Asn572, Ser574, Thr576, and Glu581.

The protein belongs to the peptidase C2 family. As to expression, not expressed in tissues tested.

Calcium-regulated non-lysosomal thiol-protease. The protein is Calpain-14 (CAPN14) of Homo sapiens (Human).